A 277-amino-acid polypeptide reads, in one-letter code: uncharacterized protein (277 aa).

Disordered regions lie at residues 1–103 (PPLR…LEDP) and 254–277 (PSPS…SPPR). Basic and acidic residues predominate over residues 48 to 65 (RRNDTGKDRGTHRQRAET). Polar residues predominate over residues 66–77 (PSRSPVPTTNTV). Residues 82–91 (PAVRRQRRTQ) show a composition bias toward basic residues.

This is an uncharacterized protein from Homo sapiens (Human).